The sequence spans 1484 residues: Ral GTPase-activating protein subunit beta (1484 aa).

Disordered stretches follow at residues 355-437 and 697-728; these read PRSD…APRR and GGENNLKSHSRTNSGISSASGGSTEPTTPDSE. Phosphoserine is present on S359. Residues T363 and T379 each carry the phosphothreonine modification. Composition is skewed to polar residues over residues 369–381, 392–428, and 701–725; these read SMPQSAAVNTTPP, NKATMKTSTVTTAHTSKVQHQASSTSPLSSPNQTSSE, and NLKSHSRTNSGISSASGGSTEPTTP. S421 and S710 each carry phosphoserine. T724 carries the phosphothreonine modification. Residues 1138–1382 form the Rap-GAP domain; sequence IGYLDLLPCR…TTLEKEVPVI (245 aa). The residue at position 1275 (S1275) is a Phosphoserine. Residues 1301-1325 form a disordered region; the sequence is DSLNSSQRLSPSSRMKKLPQGRPVP. The segment covering 1302 to 1313 has biased composition (low complexity); the sequence is SLNSSQRLSPSS.

In terms of assembly, component of the heterodimeric RalGAP1 complex with RALGAPA1 and of the heterodimeric RalGAP2 complex with RALGAPA2. Heterodimerization is required for activity. As to expression, detected in brain, thymus, lung, heart, spleen, liver and testis (at protein level).

Functionally, non-catalytic subunit of the heterodimeric RalGAP1 and RalGAP2 complexes which act as GTPase activators for the Ras-like small GTPases RALA and RALB. The chain is Ral GTPase-activating protein subunit beta from Rattus norvegicus (Rat).